A 391-amino-acid chain; its full sequence is Phosphoprotein (391 aa).

Residues 1–194 are N-terminus domain; the sequence is MDQFIKQDET…GSLSGATLYA (194 aa). Threonine 10, threonine 16, threonine 91, threonine 150, and threonine 165 each carry phosphothreonine. Serine 188 is modified (phosphoserine). The interval 216 to 279 is multimerization; the sequence is ISANEIMDLL…MATVKIMDPG (64 aa). Residues 218–245 adopt a coiled-coil conformation; sequence ANEIMDLLRGMDARLQHLEQKVDKVLAQ. The residue at position 250 (threonine 250) is a Phosphothreonine. At serine 257 the chain carries Phosphoserine. Phosphothreonine occurs at positions 258 and 282. Serine 292 and serine 294 each carry phosphoserine. Threonine 298 is modified (phosphothreonine). Phosphoserine occurs at positions 301 and 374. An interaction with the nucleoprotein region spans residues 343 to 391; the sequence is AGQKVMITKMITDCVANPQMKQAFEQRLAKASTEDALNDIKRDIIRSAI. A Phosphothreonine modification is found at threonine 375.

It belongs to the rubulavirus/avulavirus P protein family. In terms of assembly, homotetramer. Interacts (via multimerization domain) with polymerase L; this interaction forms the polymerase L-P complex. Interacts (via N-terminus) with N0 (via Ncore); this interaction allows P to chaperon N0 to avoid N polymerization before encapsidation. Interacts (via C-terminus) with N-RNA template; this interaction positions the polymerase on the template for both transcription and replication. Interacts with host RPS6KB1 kinase; this interaction may play a role in the viral replication and transcription.

Its subcellular location is the virion. Essential cofactor of the RNA polymerase L that plays a central role in the transcription and replication by forming the polymerase complex with RNA polymerase L and recruiting L to the genomic N-RNA template for RNA synthesis. Also plays a central role in the encapsidation of nascent RNA chains by forming the encapsidation complex with the nucleocapsid protein N (N-P complex). Acts as a chaperone for newly synthesized free N protein, so-called N0, allowing encapsidation of nascent RNA chains during replication. The nucleoprotein protein N prevents excessive phosphorylation of P, which leads to down-regulation of viral transcription/ replication. Participates, together with N, in the formation of viral factories (viroplasms), which are large inclusions in the host cytoplasm where replication takes place. The sequence is that of Phosphoprotein from Homo sapiens (Human).